Consider the following 498-residue polypeptide: NADP-dependent glyceraldehyde-3-phosphate dehydrogenase (498 aa).

Residues Arg-118 and 171 to 172 (NY) contribute to the substrate site. 3 residues coordinate NADP(+): Lys-194, Thr-197, and Asp-232. Position 247–251 (247–251 (GGDTG)) interacts with NAD(+). The active-site Proton acceptor is Glu-266. Residue 299–301 (RCT) coordinates substrate. Residue Cys-300 is the Nucleophile of the active site. Position 393 (Glu-393) interacts with NADP(+). A substrate-binding site is contributed by Arg-453.

It belongs to the aldehyde dehydrogenase family.

The protein localises to the cytoplasm. The catalysed reaction is D-glyceraldehyde 3-phosphate + NADP(+) + H2O = (2R)-3-phosphoglycerate + NADPH + 2 H(+). Important as a means of generating NADPH for biosynthetic reactions. The polypeptide is NADP-dependent glyceraldehyde-3-phosphate dehydrogenase (GPN1) (Zea mays (Maize)).